Reading from the N-terminus, the 430-residue chain is Histidine--tRNA ligase (430 aa).

It belongs to the class-II aminoacyl-tRNA synthetase family. In terms of assembly, homodimer.

Its subcellular location is the cytoplasm. The catalysed reaction is tRNA(His) + L-histidine + ATP = L-histidyl-tRNA(His) + AMP + diphosphate + H(+). The chain is Histidine--tRNA ligase from Lactococcus lactis subsp. cremoris (strain MG1363).